Consider the following 473-residue polypeptide: Trigger factor (473 aa).

The region spanning 162–243 is the PPIase FKBP-type domain; sequence GDFVSIDLSA…VKSIKVRELP (82 aa). The interval 433–473 is disordered; that stretch reads TAEFFGPSGEQAEAEQDEAAPAEDATEETDADSDEAADDSK. Over residues 444–473 the composition is skewed to acidic residues; it reads AEAEQDEAAPAEDATEETDADSDEAADDSK.

It belongs to the FKBP-type PPIase family. Tig subfamily.

It is found in the cytoplasm. The enzyme catalyses [protein]-peptidylproline (omega=180) = [protein]-peptidylproline (omega=0). Its function is as follows. Involved in protein export. Acts as a chaperone by maintaining the newly synthesized protein in an open conformation. Functions as a peptidyl-prolyl cis-trans isomerase. In Mycolicibacterium vanbaalenii (strain DSM 7251 / JCM 13017 / BCRC 16820 / KCTC 9966 / NRRL B-24157 / PYR-1) (Mycobacterium vanbaalenii), this protein is Trigger factor.